Consider the following 230-residue polypeptide: Small ribosomal subunit protein uS7B (230 aa).

Residues 1 to 22 (MSEEVVESSSQEASQVIPQEQE) form a disordered region. A compositionally biased stretch (low complexity) spans 7 to 16 (ESSSQEASQV).

Belongs to the universal ribosomal protein uS7 family.

This is Small ribosomal subunit protein uS7B (RpS5b) from Drosophila melanogaster (Fruit fly).